Consider the following 159-residue polypeptide: 3-hydroxyacyl-[acyl-carrier-protein] dehydratase FabZ (159 aa).

The active site involves His58.

The protein belongs to the thioester dehydratase family. FabZ subfamily.

The protein localises to the cytoplasm. The enzyme catalyses a (3R)-hydroxyacyl-[ACP] = a (2E)-enoyl-[ACP] + H2O. In terms of biological role, involved in unsaturated fatty acids biosynthesis. Catalyzes the dehydration of short chain beta-hydroxyacyl-ACPs and long chain saturated and unsaturated beta-hydroxyacyl-ACPs. The polypeptide is 3-hydroxyacyl-[acyl-carrier-protein] dehydratase FabZ (Helicobacter pylori (strain J99 / ATCC 700824) (Campylobacter pylori J99)).